The chain runs to 526 residues: MTSRSSQGDAAPFLTQADNTEEEGAPDPGGHSSDEEEEEGKDHGKEAHLLTGISYRHSVTIVIILFYINLLNYMDRFTVAGVLSDIKEDYHISDSNSGLVQTVFICSYMFLAPVFGYLGDRYNRKLIMCIGISFWSLVTLLSSFVSKQYFWLFLLTRGLVGVGEASYSTIAPTIIADLFLADQRSRMLSFFYFATPVGCGLGYIAGSKVTSTAGDWHWALRVTPGLGLVAVLLLIFVAKEPPRGALERKSDRPLTNTSWFSDVKALLKNPSFILSTFGFTTVAFVTGALALWGPTYLMRSRRVIYKTEPCQGGICNYDDSMIFGGITCVTGVLGVLTGVEISKRYRKTNPRADPLVCAVGMISSAPFLYLSLAFADTSLVATYAFIFIGETLLSLNWALVADILLYVVIPTRRSTAEALQIVVSHLLGDAGSPYLIGVISDQIQKGKAPSFLIQMRSLEYALMICAFVGVIGGGFFLATALFIEKDRKRAELFSQGLLPADETDAERIVVPKRGRSTKVPVSSVLI.

The interval 1–43 (MTSRSSQGDAAPFLTQADNTEEEGAPDPGGHSSDEEEEEGKDH) is disordered. Transmembrane regions (helical) follow at residues 48–68 (HLLT…LFYI), 98–118 (GLVQ…FGYL), 126–146 (LIMC…SFVS), 159–179 (LVGV…ADLF), 187–207 (MLSF…IAGS), 218–238 (WALR…IFVA), 272–292 (FILS…LALW), 321–341 (MIFG…GVEI), 355–375 (LVCA…LAFA), 385–405 (FIFI…DILL), 419–439 (LQIV…IGVI), and 463–483 (MICA…ALFI).

The protein belongs to the major facilitator superfamily. Spinster (TC 2.A.1.49) family.

The protein resides in the lysosome membrane. The enzyme catalyses a 1-acyl-sn-glycero-3-phosphocholine(out) + H(+)(out) = a 1-acyl-sn-glycero-3-phosphocholine(in) + H(+)(in). The catalysed reaction is a 1-acyl-sn-glycero-3-phosphoethanolamine(out) + H(+)(out) = a 1-acyl-sn-glycero-3-phosphoethanolamine(in) + H(+)(in). It catalyses the reaction a 1-O-(1Z-alkenyl)-sn-glycero-3-phosphocholine(out) + H(+)(out) = a 1-O-(1Z-alkenyl)-sn-glycero-3-phosphocholine(in) + H(+)(in). It carries out the reaction a 1-O-(1Z-alkenyl)-sn-glycero-3-phosphoethanolamine(out) + H(+)(out) = a 1-O-(1Z-alkenyl)-sn-glycero-3-phosphoethanolamine(in) + H(+)(in). In terms of biological role, mediates the rate-limiting, proton-dependent, lysosomal efflux of lysophospholipids. Selective for zwitterionic headgroups such as lysophosphatidylcholine (LPC) and lysophosphatidylethanolamine (LPE). Essential player in lysosomal homeostasis. This is Protein spinster homolog 1 (spns1) from Xenopus tropicalis (Western clawed frog).